A 20-amino-acid chain; its full sequence is 44 kDa cell wall protein 2 (20 aa).

It is found in the secreted. It localises to the cell wall. This chain is 44 kDa cell wall protein 2, found in Solanum lycopersicum (Tomato).